We begin with the raw amino-acid sequence, 215 residues long: Adenylate kinase (215 aa).

10 to 15 is an ATP binding site; that stretch reads GAGKGT. An NMP region spans residues 30 to 59; the sequence is STGDIFRKNISENTPLGMEARSYMDKGLLV. Residues Thr31, Arg36, 57–59, 85–88, and Gln92 each bind AMP; these read LLV and GFPR. Residues 126–163 form an LID region; the sequence is GRRVCTSCGGSFHIKFNPPTIDGKCNLCGSDIVQRKDD. ATP is bound at residue Arg127. The Zn(2+) site is built by Cys130 and Cys133. 136–137 contributes to the ATP binding site; sequence SF. Zn(2+)-binding residues include Cys150 and Cys153. Residues Arg160 and Arg171 each contribute to the AMP site. Lys199 contacts ATP.

It belongs to the adenylate kinase family. Monomer.

The protein resides in the cytoplasm. The enzyme catalyses AMP + ATP = 2 ADP. Its pathway is purine metabolism; AMP biosynthesis via salvage pathway; AMP from ADP: step 1/1. Catalyzes the reversible transfer of the terminal phosphate group between ATP and AMP. Plays an important role in cellular energy homeostasis and in adenine nucleotide metabolism. This Clostridium botulinum (strain Alaska E43 / Type E3) protein is Adenylate kinase.